Consider the following 663-residue polypeptide: MKHLVTTALAYTNGPLHLGHARSTYIPADIFTRYLRLKRENVFHVGGTDNHGVPITLKAEKEGVTPLDIVDRYHNAIKEDLDSLNVSFDSFGRTHSDIHIETAQEFYKTLKENGYIYEKEIEQFYCEKCSMSLADRYVEGKCPFCEGEARGDHCEVCGRHLEPTELLEPYCIHCNSKPEIKKSIHYFFKLSAMKEELTEYITNAKEMPEHVKNMALRWIEELHDWDVSRNLTWGVPIPKSNGQVMYVWIEAPIGYVSFTKELGEIWKDYWISKDVQSKITHFIGKDITVHHAVFWPGILKGVKNYKMPDSVVSGGYLTLENKKMSTSKNWVVWVKDFVEKFSPDYLRYFLMVNAPLNRDTDFSWDDFQKRINTELIDIIGNFSHRTLVFTERKFGKIPNVQKDTLKEEDLLLIRKCEKTTETFDKLIREYNFKDAIMEIILLSKEGNAYFQAMQPWAITDEERLKEVMYTCCTTLKYIVYLLSPFMPVKTGELLDLMNEELDLEIRGNDLKKPKVIFTKLEEMDILKMKEKLNSEIKFEEKVSKNEKTAKKTGAKMELIDIEYFTKVDLRVGKVLEVEDVKKSKKLYKIIVDLGNEQRQIISGLKGDYEVEELIGKNVIVICNLKPAKLCGVESEGMLLAAESDGIVSLLNIDREISLGSKIH.

Residues 10 to 20 carry the 'HIGH' region motif; sequence AYTNGPLHLGH. Zn(2+)-binding residues include Cys-142, Cys-145, Cys-154, and Cys-157. A 'KMSKS' region motif is present at residues 323-327; it reads KMSTS. Residue Thr-326 participates in ATP binding. The tRNA-binding domain occupies 563 to 663; the sequence is YFTKVDLRVG…REISLGSKIH (101 aa).

This sequence belongs to the class-I aminoacyl-tRNA synthetase family. MetG type 1 subfamily. In terms of assembly, homodimer. Zn(2+) serves as cofactor.

Its subcellular location is the cytoplasm. It catalyses the reaction tRNA(Met) + L-methionine + ATP = L-methionyl-tRNA(Met) + AMP + diphosphate. Its function is as follows. Is required not only for elongation of protein synthesis but also for the initiation of all mRNA translation through initiator tRNA(fMet) aminoacylation. This Methanococcus vannielii (strain ATCC 35089 / DSM 1224 / JCM 13029 / OCM 148 / SB) protein is Methionine--tRNA ligase.